Here is a 734-residue protein sequence, read N- to C-terminus: Adhesion G protein-coupled receptor E5 (734 aa).

The N-terminal stretch at 1 to 26 (MGGPHGGPFLLFHVLCFLLTLSEVGS) is a signal peptide. The Extracellular segment spans residues 27–449 (QNSKACALPC…VEDPKLALIT (423 aa)). Residues 28–70 (NSKACALPCPPNSSCVNGTACRCAPGFISFSGEIFTDPLESCD) enclose the EGF-like 1 domain. Cystine bridges form between cysteine 32/cysteine 42, cysteine 36/cysteine 48, cysteine 50/cysteine 69, cysteine 75/cysteine 89, cysteine 83/cysteine 98, cysteine 100/cysteine 121, cysteine 127/cysteine 140, cysteine 134/cysteine 149, and cysteine 151/cysteine 170. Residues asparagine 39 and asparagine 44 are each glycosylated (N-linked (GlcNAc...) asparagine). One can recognise an EGF-like 2; calcium-binding domain in the interval 71–122 (DINECGPPSPVDCGSSADCQNTEGGYYCTCSPGYEPVSGAMIFRNESENTCR). Residues asparagine 115 and asparagine 136 are each glycosylated (N-linked (GlcNAc...) asparagine). Residues 123–171 (DVDECSSGQHQCHNSTVCFNTVGSYTCHCREGWEPKHGLKNKQKDTICK) form the EGF-like 3; calcium-binding domain. The GAIN-B domain occupies 265–441 (TYRSLDNTEL…AILMAHYDVE (177 aa)). Residues asparagine 285, asparagine 327, asparagine 372, asparagine 403, and asparagine 418 are each glycosylated (N-linked (GlcNAc...) asparagine). 2 disulfides stabilise this stretch: cysteine 393–cysteine 423 and cysteine 411–cysteine 425. Positions 393 to 441 (CAFWKKDSNGNGSWATTGCWKMGRGNGSITCQCSHLSSFAILMAHYDVE) are GPS. A helical membrane pass occupies residues 450–470 (KVGLALSLACLLLCILTFLLV). At 471 to 478 (RPIQGSRT) the chain is on the cytoplasmic side. The helical transmembrane segment at 479-499 (TVHLHLCICLFVGSAIFLAGI) threads the bilayer. Residues 500 to 519 (ENEGGEVGTRCRLVAVLLHY) are Extracellular-facing. Residues 520 to 540 (CFLAAFCWMSLEGVELYFLVV) form a helical membrane-spanning segment. Residues 541–550 (RVFQGQGMRK) lie on the Cytoplasmic side of the membrane. Residues 551–571 (LWLCLIGYGVPLIIVGISAGA) traverse the membrane as a helical segment. Topologically, residues 572–593 (YSKGYGREKFCWLNFEGGFLWS) are extracellular. The chain crosses the membrane as a helical span at residues 594-614 (FVGPVTFIVLGNAIIFVITVW). The Cytoplasmic portion of the chain corresponds to 615 to 637 (KLTQKFSEINPDIKKLKKARVLT). Residues 638-658 (ITAIAQLFVLGCTWVFGLLLF) traverse the membrane as a helical segment. At 659 to 662 (NPES) the chain is on the extracellular side. A helical membrane pass occupies residues 663-683 (WVLSYIFSILNCLQGFFLFVL). Over 684-734 (YCLLNKKVREEYRKWACMVAGNKYSEFATTTSGSGSSHNQTQALRPSESGM) the chain is Cytoplasmic. The interval 712–734 (TTTSGSGSSHNQTQALRPSESGM) is disordered. Position 713 is a phosphothreonine (threonine 713). Position 715 is a phosphoserine (serine 715). Residue threonine 724 is modified to Phosphothreonine. Phosphoserine is present on residues serine 730 and serine 732.

This sequence belongs to the G-protein coupled receptor 2 family. LN-TM7 subfamily. Forms a heterodimer, consisting of a large extracellular region (alpha subunit) non-covalently linked to a seven-transmembrane moiety (beta subunit). Interacts with complement decay-accelerating factor (DAF) and with chondroitin sulfate. In terms of processing, proteolytically cleaved into 2 subunits, an extracellular alpha subunit and a seven-transmembrane subunit.

Its subcellular location is the cell membrane. It is found in the secreted. The protein localises to the extracellular space. Functionally, receptor potentially involved in both adhesion and signaling processes early after leukocyte activation. Plays an essential role in leukocyte migration. The chain is Adhesion G protein-coupled receptor E5 from Bos taurus (Bovine).